Reading from the N-terminus, the 498-residue chain is Putative BTB/POZ domain-containing protein L67 (498 aa).

Positions 26–96 (SDINITLSDN…MYGISLSEIN (71 aa)) constitute a BTB domain.

It belongs to the mimivirus BTB/WD family.

This Acanthamoeba polyphaga (Amoeba) protein is Putative BTB/POZ domain-containing protein L67.